The sequence spans 61 residues: Conotoxin Am14.1 (61 aa).

Propeptides lie at residues 1 to 19 (MLSVQLITPSSHGTAHLPR) and 52 to 61 (KRDLDLFTDQ).

In terms of processing, mostly non-hydroxylated. Contains 2 disulfide bonds. As to expression, expressed by the venom duct.

It localises to the secreted. In terms of biological role, probable toxin that inhibits ion channels. In Conus amadis (Amadis cone), this protein is Conotoxin Am14.1.